The chain runs to 349 residues: N-acetyltaurine hydrolase (349 aa).

Positions 26, 28, 169, 201, 230, and 298 each coordinate a divalent metal cation.

This sequence belongs to the metallo-dependent hydrolases superfamily. Phosphotriesterase family. It depends on a divalent metal cation as a cofactor.

Its subcellular location is the cytoplasm. It is found in the cytosol. It catalyses the reaction N-acetyltaurine + H2O = taurine + acetate. It carries out the reaction N-propanoyltaurine + H2O = propanoate + taurine. The catalysed reaction is N-acetyl-L-methionine + H2O = L-methionine + acetate. The enzyme catalyses N-acetyl-L-isoleucine + H2O = L-isoleucine + acetate. It catalyses the reaction N-acetyl-L-leucine + H2O = L-leucine + acetate. It carries out the reaction N-acetyl-L-valine + H2O = L-valine + acetate. In terms of biological role, N-acetyltaurine hydrolase that catalyzes the hydrolysis of N-acetyltaurine into taurine and acetate. PTER also acts on other N-acetyl amino acids (Met, Ile, Leu, Val) and N-propionyltaurine, but at lower rates. This Danio rerio (Zebrafish) protein is N-acetyltaurine hydrolase (pter).